The sequence spans 493 residues: Probable plastidic glucose transporter 2 (493 aa).

Positions 1 to 14 (MLGLQRETSSMYKR) are enriched in polar residues. The disordered stretch occupies residues 1–24 (MLGLQRETSSMYKRTSSRDYSPMI). 12 helical membrane-spanning segments follow: residues 52–72 (LPHV…LGVV), 94–114 (LVVS…GGVA), 128–148 (LPMI…VMLL), 151–171 (FLVG…VTEV), 182–202 (SFIQ…GIPV), 211–231 (VCFW…FLCA), 293–313 (VVFI…NAVF), 329–349 (LGNI…MVLM), 356–376 (LLLL…VGAT), 392–412 (GTLV…GLLL), 424–444 (AMAF…LLFL), and 450–470 (LGPR…VMFV).

Belongs to the major facilitator superfamily. Sugar transporter (TC 2.A.1.1) family.

It localises to the plastid. Its subcellular location is the chloroplast membrane. In terms of biological role, may be involved in the efflux of glucose towards the cytosol. In Arabidopsis thaliana (Mouse-ear cress), this protein is Probable plastidic glucose transporter 2.